The chain runs to 253 residues: Coenzyme F420:L-glutamate ligase (253 aa).

GTP is bound by residues 9 to 12, 38 to 39, and Lys43; these read LPEI and ST. Residue Asp113 coordinates a divalent metal cation. Asn116 contributes to the GTP binding site. A divalent metal cation-binding residues include Asp150, Thr151, and Glu208. 206–213 contributes to the GTP binding site; sequence SGEGDDGT.

Belongs to the CofE family. Homodimer. The cofactor is Mg(2+). Mn(2+) is required as a cofactor. Requires K(+) as cofactor.

It carries out the reaction oxidized coenzyme F420-0 + GTP + L-glutamate = oxidized coenzyme F420-1 + GDP + phosphate + H(+). The catalysed reaction is oxidized coenzyme F420-1 + GTP + L-glutamate = oxidized coenzyme F420-2 + GDP + phosphate + H(+). It participates in cofactor biosynthesis; coenzyme F420 biosynthesis. Its function is as follows. Catalyzes the GTP-dependent successive addition of two or more gamma-linked L-glutamates to the L-lactyl phosphodiester of 7,8-didemethyl-8-hydroxy-5-deazariboflavin (F420-0) to form coenzyme F420-0-glutamyl-glutamate (F420-2) or polyglutamated F420 derivatives. The sequence is that of Coenzyme F420:L-glutamate ligase from Halobacterium salinarum (strain ATCC 29341 / DSM 671 / R1).